A 95-amino-acid chain; its full sequence is Small ribosomal subunit protein uS14 (95 aa).

Belongs to the universal ribosomal protein uS14 family. As to quaternary structure, part of the 30S ribosomal subunit. Contacts proteins S3 and S10.

In terms of biological role, binds 16S rRNA, required for the assembly of 30S particles and may also be responsible for determining the conformation of the 16S rRNA at the A site. In Carsonella ruddii, this protein is Small ribosomal subunit protein uS14 (rpsN).